The sequence spans 372 residues: N-methyl-L-tryptophan oxidase (372 aa).

Residue D4–H34 participates in FAD binding. The residue at position 308 (C308) is an S-8alpha-FAD cysteine.

This sequence belongs to the MSOX/MTOX family. MTOX subfamily. Monomer. FAD serves as cofactor.

It catalyses the reaction N(alpha)-methyl-L-tryptophan + O2 + H2O = L-tryptophan + formaldehyde + H2O2. Its function is as follows. Catalyzes the oxidative demethylation of N-methyl-L-tryptophan. The protein is N-methyl-L-tryptophan oxidase of Escherichia coli O7:K1 (strain IAI39 / ExPEC).